The chain runs to 378 residues: Peptide chain release factor RF2 (378 aa).

Gln-253 carries the post-translational modification N5-methylglutamine.

Belongs to the prokaryotic/mitochondrial release factor family. Interacts with the ribosome. Interacts with ribosomal protein L11. Recruited to stalled E.coli ribosomes by E.coli ArfA.

The protein localises to the cytoplasm. In terms of biological role, peptide chain release factor 2 directs the termination of translation in response to the peptide chain termination codons UGA and UAA. In endogenous ribosomes interacts with P-site tRNA and 23S rRNA. In the presence of truncated mRNA in the 70S ribosome, ArfA and RF2 interact such that the GGQ peptide hydrolysis motif of RF2 rises into the peptidyl-transferase center and releases the ribosome. Recruited to stalled E.coli 70S ribosomes by E.coli ArfA, but cannot be functionally accomodated in the peptidyl-transferase center. Note T.thermophilus probably does not encode arfA. This chain is Peptide chain release factor RF2 (prfB), found in Thermus thermophilus (strain ATCC 27634 / DSM 579 / HB8).